The chain runs to 173 residues: Dual-action ribosomal maturation protein DarP (173 aa).

It belongs to the DarP family.

The protein resides in the cytoplasm. Functionally, member of a network of 50S ribosomal subunit biogenesis factors which assembles along the 30S-50S interface, preventing incorrect 23S rRNA structures from forming. Promotes peptidyl transferase center (PTC) maturation. This Pseudomonas entomophila (strain L48) protein is Dual-action ribosomal maturation protein DarP.